We begin with the raw amino-acid sequence, 79 residues long: Probable Fe(2+)-trafficking protein (79 aa).

This sequence belongs to the Fe(2+)-trafficking protein family. Monomer.

In terms of biological role, could be a mediator in iron transactions between iron acquisition and iron-requiring processes, such as synthesis and/or repair of Fe-S clusters in biosynthetic enzymes. The chain is Probable Fe(2+)-trafficking protein from Blochmanniella floridana.